The primary structure comprises 65 residues: Large ribosomal subunit protein bL33m (65 aa).

The protein belongs to the bacterial ribosomal protein bL33 family. In terms of assembly, component of the mitochondrial ribosome large subunit (39S) which comprises a 16S rRNA and about 50 distinct proteins.

Its subcellular location is the mitochondrion. The polypeptide is Large ribosomal subunit protein bL33m (mRpL33) (Anopheles gambiae (African malaria mosquito)).